Here is a 268-residue protein sequence, read N- to C-terminus: Norsolorinic acid ketoreductase nor1 (268 aa).

Positions 32, 79, 108, 182, 186, 213, and 215 each coordinate NADP(+). Residue Tyr-182 is the Proton donor of the active site. Lys-186 functions as the Lowers pKa of active site Tyr in the catalytic mechanism.

The protein belongs to the short-chain dehydrogenases/reductases (SDR) family.

The protein localises to the cytoplasm. It localises to the cytosol. Its subcellular location is the vacuole. It carries out the reaction (1'S)-averantin + NADP(+) = norsolorinic acid + NADPH + H(+). Its pathway is mycotoxin biosynthesis. Norsolorinic acid ketoreductase; part of the fragmented gene cluster that mediates the biosynthesis of dothistromin (DOTH), a polyketide toxin very similar in structure to the aflatoxin precursor, versicolorin B. The first step of the pathway is the conversion of acetate to norsolorinic acid (NOR) and requires the fatty acid synthase subunits hexA and hexB, as well as the polyketide synthase pksA. PksA combines a hexanoyl starter unit and 7 malonyl-CoA extender units to synthesize the precursor NOR. The hexanoyl starter unit is provided to the acyl-carrier protein (ACP) domain by the fungal fatty acid synthase hexA/hexB. The second step is the conversion of NOR to averantin (AVN) and requires the norsolorinic acid ketoreductase nor1, which catalyzes the dehydration of norsolorinic acid to form (1'S)-averantin. The cytochrome P450 monooxygenase avnA then catalyzes the hydroxylation of AVN to 5'hydroxyaverantin (HAVN). The next step is performed by adhA that transforms HAVN to averufin (AVF). Averufin might then be converted to hydroxyversicolorone by cypX and avfA. Hydroxyversicolorone is further converted versiconal hemiacetal acetate (VHA) by moxY. VHA is then the substrate for the versiconal hemiacetal acetate esterase est1 to yield versiconal (VAL). Versicolorin B synthase vbsA then converts VAL to versicolorin B (VERB) by closing the bisfuran ring. Then, the activity of the versicolorin B desaturase verB leads to versicolorin A (VERA). DotB, a predicted chloroperoxidase, may perform epoxidation of the A-ring of VERA. Alternatively, a cytochrome P450, such as cypX or avnA could catalyze this step. It is also possible that another, uncharacterized, cytochrome P450 enzyme is responsible for this step. Opening of the epoxide could potentially be achieved by the epoxide hydrolase epoA. However, epoA seems not to be required for DOTH biosynthesis, but other epoxide hydrolases may have the ability to complement this hydrolysis. Alternatively, opening of the epoxide ring could be achieved non-enzymatically. The next step is the deoxygenation of ring A to yield the 5,8-dihydroxyanthraquinone which is most likely catalyzed by the NADPH dehydrogenase encoded by ver1. The last stages of DOTH biosynthesis are proposed to involve hydroxylation of the bisfuran. OrdB and norB might have oxidative roles here. An alternative possibility is that cytochrome P450 monoogenases such as avnA and cypX might perform these steps in addition to previously proposed steps. This Dothistroma septosporum (strain NZE10 / CBS 128990) (Red band needle blight fungus) protein is Norsolorinic acid ketoreductase nor1.